The sequence spans 228 residues: MGFGDLKSPAGLKVLNEFLADKSYIEGYVPSQADVAVFDALSGAPPADLFHALRWYNHIKSYEKQKSSLPGVKKPLGNYGPVNIEDTTGSTAKDTKEEDDDDDIDLFGSDDEEENEESKRVREERLAQYEAKKSKKPALIAKSSILLDVKPWDDETDMAKLEECVRSIQMEGLVWGASKLVPVGYGIKKLQIQCVVEDDKVGTDVLEENITAFEDFVQSMDVAAFNKI.

The 89-residue stretch at 2–90 (GFGDLKSPAG…PVNIEDTTGS (89 aa)) folds into the GST C-terminal domain. Positions 70-122 (PGVKKPLGNYGPVNIEDTTGSTAKDTKEEDDDDDIDLFGSDDEEENEESKRVR) are disordered. The span at 97 to 116 (EEDDDDDIDLFGSDDEEENE) shows a compositional bias: acidic residues. The residue at position 109 (Ser-109) is a Phosphoserine; by CK2.

It belongs to the EF-1-beta/EF-1-delta family. In terms of assembly, EF-1 is composed of 4 subunits: alpha, beta (alpha subunit of the eEF1B subcomplex), delta (beta subunit of the eEF1B subcomplex), and gamma (gamma subunit of the eEF1B subcomplex). Interacts with elongation factor EEF1A1. In terms of processing, phosphorylation affects the GDP/GTP exchange rate.

In terms of biological role, catalytic subunit of the guanine nucleotide exchange factor (GEF) (eEF1B subcomplex) of the eukaryotic elongation factor 1 complex (eEF1). Stimulates the exchange of GDP for GTP on elongation factor 1A (eEF1A), probably by displacing GDP from the nucleotide binding pocket in eEF1A. In Xenopus tropicalis (Western clawed frog), this protein is Elongation factor 1-beta (eef1b).